Consider the following 33-residue polypeptide: MIFTLGWASLAAIFTFSIAMVVWGRNGDGSIDL.

Residues 2-22 (IFTLGWASLAAIFTFSIAMVV) form a helical membrane-spanning segment.

Belongs to the PetN family. As to quaternary structure, the 4 large subunits of the cytochrome b6-f complex are cytochrome b6, subunit IV (17 kDa polypeptide, PetD), cytochrome f and the Rieske protein, while the 4 small subunits are PetG, PetL, PetM and PetN. The complex functions as a dimer.

Its subcellular location is the cellular thylakoid membrane. In terms of biological role, component of the cytochrome b6-f complex, which mediates electron transfer between photosystem II (PSII) and photosystem I (PSI), cyclic electron flow around PSI, and state transitions. This Prochlorococcus marinus (strain NATL2A) protein is Cytochrome b6-f complex subunit 8.